We begin with the raw amino-acid sequence, 1249 residues long: Minor capsid protein M1249L (1249 aa).

It belongs to the asfivirus M1249L family. As to quaternary structure, interacts with the minor capsid protein p17 and with the hexon capsid protein p72 capsomers; these interactions form a rigid zipper structure that stabilizes the capsomers. Interacts with host IRF3.

The protein resides in the virion. The protein localises to the host cytoplasm. Functionally, together with the penton and the other minor capsid proteins (p17, p49), forms a complicated network immediately below the outer capsid shell, stabilizing the whole capsid. In addition, blocks IFN-beta transactivation mediated by the cGAS-STING pathway and regulates the transcriptional activity of IFN-beta. Mechanistically, suppresses the phosphorylation of host key adapter protein TBK1 and degrades host IRF3 in the cytoplasm. This chain is Minor capsid protein M1249L, found in African swine fever virus (isolate Tick/South Africa/Pretoriuskop Pr4/1996) (ASFV).